Reading from the N-terminus, the 938-residue chain is Isoleucine--tRNA ligase (938 aa).

The 'HIGH' region motif lies at 58–68; sequence PYANGNIHMGH. L-isoleucyl-5'-AMP is bound at residue Glu566. The 'KMSKS' region motif lies at 607-611; sequence KMSKS. Residue Lys610 coordinates ATP. Residues Cys906, Cys909, Cys926, and Cys929 each coordinate Zn(2+).

Belongs to the class-I aminoacyl-tRNA synthetase family. IleS type 1 subfamily. In terms of assembly, monomer. Zn(2+) is required as a cofactor.

It localises to the cytoplasm. It catalyses the reaction tRNA(Ile) + L-isoleucine + ATP = L-isoleucyl-tRNA(Ile) + AMP + diphosphate. In terms of biological role, catalyzes the attachment of isoleucine to tRNA(Ile). As IleRS can inadvertently accommodate and process structurally similar amino acids such as valine, to avoid such errors it has two additional distinct tRNA(Ile)-dependent editing activities. One activity is designated as 'pretransfer' editing and involves the hydrolysis of activated Val-AMP. The other activity is designated 'posttransfer' editing and involves deacylation of mischarged Val-tRNA(Ile). This chain is Isoleucine--tRNA ligase, found in Nitratidesulfovibrio vulgaris (strain DP4) (Desulfovibrio vulgaris).